We begin with the raw amino-acid sequence, 425 residues long: Histone-binding protein RBBP4 (425 aa).

Ala-2 is subject to N-acetylalanine. Lys-4 bears the N6-acetyllysine; alternate mark. Lys-4 participates in a covalent cross-link: Glycyl lysine isopeptide (Lys-Gly) (interchain with G-Cter in SUMO2); alternate. Lys-4 is covalently cross-linked (Glycyl lysine isopeptide (Lys-Gly) (interchain with G-Cter in ubiquitin); alternate). WD repeat units lie at residues Tyr-32–Gly-125, Glu-126–Gly-175, His-176–Phe-223, Gly-225–Asp-270, Ala-271–Glu-314, Ser-315–Gly-371, and Gly-372–Met-404. Position 110 is a phosphoserine (Ser-110). Residue Lys-160 is modified to N6-acetyllysine; alternate. Residue Lys-160 forms a Glycyl lysine isopeptide (Lys-Gly) (interchain with G-Cter in SUMO2); alternate linkage. Ser-355 is subject to Phosphoserine.

This sequence belongs to the WD repeat RBAP46/RBAP48/MSI1 family. As to quaternary structure, binds directly to helix 1 of the histone fold of histone H4, a region that is not accessible when H4 is in chromatin. Subunit of the chromatin assembly factor 1 (CAF-1) complex, which is composed of RBBP4, CHAF1B and CHAF1A. Subunit of the core histone deacetylase (HDAC) complex, which is composed of HDAC1, HDAC2, RBBP4 and RBBP7. The core HDAC complex associates with SIN3A, ARID4B/SAP180, SAP18, SAP30, SAP130, SUDS3/SAP45 and possibly ARID4A/RBP1 and ING1 to form the SIN3 HDAC complex. Component of the nucleosome remodeling and deacetylase (NuRD) repressor complex, composed of core proteins MTA1, MTA2, MTA3, RBBP4, RBBP7, HDAC1, HDAC2, MBD2, MBD3, and peripherally associated proteins CDK2AP1, CDK2AP2, GATAD2A, GATAD2B, CHD3, CHD4 and CHD5. The exact stoichiometry of the NuRD complex is unknown, and some subunits such as MBD2 and MBD3, GATAD2A and GATAD2B, and CHD3, CHD4 and CHD5 define mutually exclusive NuRD complexes. Interacts with ZNF512B; the interaction is direct and may play a role in repressing gene expression. The NuRD complex may also interact with MBD3L1 and MBD3L2. Component of the PRC2 complex, which consists of the core subunits EED, EZH1 or EZH2, SUZ12, and RBBP4, and various combinations of accessory subunits including AEBP2, JARID2, PHF19, MTF2 and EPOP. Forms a monomeric PRC2.2 (class 2) complex consisting of at least SUZ12, RBBP4, AEBP2 and JARID2. Forms a dimeric PRC2.1 (class 1, PRC-PCL) complex consisting of at least SUZ12, RBBP4, and PHF19; PHF19 stabilizes the dimeric structure which enhances PRC2 interaction with chromatin. Component of the NURF-1 ISWI chromatin remodeling complex (also called the nucleosome-remodeling factor (NURF) complex) at least composed of SMARCA1 (isoform 2), BPTF, RBBP4 and RBBP7. Within the complex interacts with isoform 2 of SMARCA1. Component of the BPFT-SMARCA1 complex at least composed of SMARCA1 (isoform 1), BPFT, RBBP4 and RBBP7; the complex is catalytically inactive and does not remodel chromatin. Within the complex interacts with isoform 1 of SMARCA1. Interacts with the ISWI chromatin remodeling complex component SMARCA5; the interaction is direct. Interacts with the viral protein-binding domain of the retinoblastoma protein (RB1). Component of the DREAM complex (also named LINC complex) at least composed of E2F4, E2F5, LIN9, LIN37, LIN52, LIN54, MYBL1, MYBL2, RBL1, RBL2, RBBP4, TFDP1 and TFDP2. The complex exists in quiescent cells where it represses cell cycle-dependent genes. It dissociates in S phase when LIN9, LIN37, LIN52 and LIN54 form a subcomplex that binds to MYBL2. Found in a complex composed of at least SINHCAF, SIN3A, HDAC1, SAP30, RBBP4, OGT and TET1. Interacts with ZNF827; the interaction is direct and recruits RBBP4 to telomeres. Interacts with MTA1; the interaction is direct and mutually exclusive with binding histone H4. Interacts with ARMC12 (via ARM domains). Interacts with BRCA1. Interacts with CDK2AP1. Interacts with CREBBP, and this interaction may be enhanced by the binding of phosphorylated CREB1 to CREBBP. Interacts with ERCC6. Interacts with HDAC7. Interacts with PHF6. Interacts with PWWP2B. Interacts with SPEN/MINT. Interacts with SUV39H1.

It is found in the nucleus. The protein localises to the chromosome. The protein resides in the telomere. Its function is as follows. Core histone-binding subunit that may target chromatin assembly factors, chromatin remodeling factors and histone deacetylases to their histone substrates in a manner that is regulated by nucleosomal DNA. Component of the chromatin assembly factor 1 (CAF-1) complex, which is required for chromatin assembly following DNA replication and DNA repair. Component of the core histone deacetylase (HDAC) complex, which promotes histone deacetylation and consequent transcriptional repression. Component of the nucleosome remodeling and histone deacetylase complex (the NuRD complex), which promotes transcriptional repression by histone deacetylation and nucleosome remodeling. Component of the PRC2 complex, which promotes repression of homeotic genes during development. Component of the NURF (nucleosome remodeling factor) complex. This chain is Histone-binding protein RBBP4 (RBBP4), found in Bos taurus (Bovine).